Reading from the N-terminus, the 81-residue chain is Small ribosomal subunit protein uS17 (81 aa).

The protein belongs to the universal ribosomal protein uS17 family. In terms of assembly, part of the 30S ribosomal subunit.

One of the primary rRNA binding proteins, it binds specifically to the 5'-end of 16S ribosomal RNA. This is Small ribosomal subunit protein uS17 from Protochlamydia amoebophila (strain UWE25).